Consider the following 91-residue polypeptide: Probable insulin-like peptide gamma-type 1 (91 aa).

An N-terminal signal peptide occupies residues 1–26; that stretch reads MSSYRQTLFILIILIVIILFVNEGQG. 3 disulfide bridges follow: Cys-37-Cys-66, Cys-49-Cys-79, and Cys-65-Cys-70.

Belongs to the insulin family.

Its subcellular location is the secreted. This chain is Probable insulin-like peptide gamma-type 1 (ins-11), found in Caenorhabditis elegans.